A 253-amino-acid chain; its full sequence is NAD-dependent protein deacetylase (253 aa).

The Deacetylase sirtuin-type domain occupies 3–253 (APSLSSGVEQ…GETLGPFVGN (251 aa)). NAD(+) contacts are provided by A29, T33, F40, R41, Q106, I108, D109, and H126. Residue F40 participates in nicotinamide binding. The nicotinamide site is built by I108 and D109. H126 functions as the Proton acceptor in the catalytic mechanism. Residues C134, C137, C159, and C162 each coordinate Zn(2+). NAD(+) is bound by residues S200, S201, N225, D242, and I243.

It belongs to the sirtuin family. Class U subfamily. It depends on Zn(2+) as a cofactor.

The protein localises to the cytoplasm. The enzyme catalyses N(6)-acetyl-L-lysyl-[protein] + NAD(+) + H2O = 2''-O-acetyl-ADP-D-ribose + nicotinamide + L-lysyl-[protein]. In terms of biological role, NAD-dependent protein deacetylase which modulates the activities of several enzymes which are inactive in their acetylated form. The polypeptide is NAD-dependent protein deacetylase (Rhodopseudomonas palustris (strain ATCC BAA-98 / CGA009)).